A 130-amino-acid chain; its full sequence is Small ribosomal subunit protein uS8x (130 aa).

It belongs to the universal ribosomal protein uS8 family.

The polypeptide is Small ribosomal subunit protein uS8x (RPS15AD) (Arabidopsis thaliana (Mouse-ear cress)).